The sequence spans 337 residues: MKIAVDAMGGDHAPKEIVLGVMKAVAQYKDIEILLFGDETKINEYLTDKTRVKIIHTDEKIESDDEPVRAVKRKKKASMVLAAQAVKDGEADACISAGNTGALMSTGLFVIGRIKGIDRPALAPTLPTVTGKGFVMLDLGANAEAKPEHLLQFGLMGSVYAEKVRKIDRPRVALLNIGTEETKGNDLTKKSFELMKNQDAYEFIGNIEARDLLMDVADVVVTDGFTGNMVLKSIEGTGAAFLSMLKMSLLNGFKNKVAASFLKKDLMELKAKMDYSEYGGACLFGVQAPVVKAHGSSNANGIFTTIRQVREMVEKQVVETIKAEVDKVKVGGTEAND.

The protein belongs to the PlsX family. As to quaternary structure, homodimer. Probably interacts with PlsY.

It localises to the cytoplasm. The catalysed reaction is a fatty acyl-[ACP] + phosphate = an acyl phosphate + holo-[ACP]. The protein operates within lipid metabolism; phospholipid metabolism. Its function is as follows. Catalyzes the reversible formation of acyl-phosphate (acyl-PO(4)) from acyl-[acyl-carrier-protein] (acyl-ACP). This enzyme utilizes acyl-ACP as fatty acyl donor, but not acyl-CoA. This is Phosphate acyltransferase from Listeria welshimeri serovar 6b (strain ATCC 35897 / DSM 20650 / CCUG 15529 / CIP 8149 / NCTC 11857 / SLCC 5334 / V8).